We begin with the raw amino-acid sequence, 64 residues long: DNA gyrase inhibitor YacG (64 aa).

The Zn(2+) site is built by C9, C12, C28, and C32. Positions 42-64 (DEENAIPGAPDMSDSDGWSEEQY) are disordered. Residues 54 to 64 (SDSDGWSEEQY) show a composition bias toward acidic residues.

This sequence belongs to the DNA gyrase inhibitor YacG family. Interacts with GyrB. Zn(2+) serves as cofactor.

Inhibits all the catalytic activities of DNA gyrase by preventing its interaction with DNA. Acts by binding directly to the C-terminal domain of GyrB, which probably disrupts DNA binding by the gyrase. The protein is DNA gyrase inhibitor YacG of Vibrio vulnificus (strain CMCP6).